We begin with the raw amino-acid sequence, 256 residues long: Hydroxyacylglutathione hydrolase (256 aa).

Zn(2+)-binding residues include histidine 55, histidine 57, aspartate 59, histidine 60, histidine 113, aspartate 130, and histidine 168.

This sequence belongs to the metallo-beta-lactamase superfamily. Glyoxalase II family. As to quaternary structure, monomer. Zn(2+) is required as a cofactor.

The catalysed reaction is an S-(2-hydroxyacyl)glutathione + H2O = a 2-hydroxy carboxylate + glutathione + H(+). It functions in the pathway secondary metabolite metabolism; methylglyoxal degradation; (R)-lactate from methylglyoxal: step 2/2. Its function is as follows. Thiolesterase that catalyzes the hydrolysis of S-D-lactoyl-glutathione to form glutathione and D-lactic acid. In Alkalilimnicola ehrlichii (strain ATCC BAA-1101 / DSM 17681 / MLHE-1), this protein is Hydroxyacylglutathione hydrolase.